A 797-amino-acid chain; its full sequence is Calcium-transporting ATPase CtpE (797 aa).

3 consecutive transmembrane segments (helical) span residues 55-75 (LLLI…LLII), 215-235 (ILQF…YTQL), and 254-274 (VPMV…VGVV). Residue D301 is the 4-aspartylphosphate intermediate of the active site. Residues D301, T303, and D536 each contribute to the Mg(2+) site. 6 helical membrane-spanning segments follow: residues 601-621 (TVYS…AIPL), 633-653 (IHVT…LSLA), 667-687 (VMTS…VTYL), 703-723 (ASTA…AVIA), 729-749 (WRLA…SLPL), and 764-784 (TSIA…MWWI).

Belongs to the cation transport ATPase (P-type) (TC 3.A.3) family.

Its subcellular location is the cell membrane. The enzyme catalyses Ca(2+)(in) + ATP + H2O = Ca(2+)(out) + ADP + phosphate + H(+). Functionally, P-type ATPase involved in specific uptake of calcium. This Mycobacterium bovis (strain ATCC BAA-935 / AF2122/97) protein is Calcium-transporting ATPase CtpE (ctpE).